The primary structure comprises 66 residues: Brevinin-1DYb (66 aa).

The first 22 residues, methionine 1 to cysteine 22, serve as a signal peptide directing secretion. A propeptide spanning residues glutamate 23–glutamate 44 is cleaved from the precursor. A disulfide bridge connects residues cysteine 60 and cysteine 66.

In terms of tissue distribution, expressed by the skin glands.

Its subcellular location is the secreted. Its function is as follows. Antimicrobial peptide. Has low activity against the Gram-positive bacterium S.aureus and the Gram-negative bacterium E.coli (MIC&lt;15 uM). Has a strong hemolytic activity. The protein is Brevinin-1DYb of Rana dybowskii (Dybovsky's frog).